We begin with the raw amino-acid sequence, 588 residues long: MNGFDAVLLVAVLLLTVVVVGAVLVGVRAVRGLAGTSRPDDPAFIAEKDRQEQSLAALRSAAEEANSTIDAAKSAAAAARTEAAAARAEAKAARAEARRVLDGARAEAEAILERVHKQAETEAEQLRTAARRSGEREAAVLAVTTRDQAAEVERRAVRMDDRERLHTEEVERLAERDRQLSAANAALEARESALAERDRELEQAEQRRRRELERVAGLTAEAARGELVEAIEAQAKREAALRVRDIEAEARSTGEERARHIVVDAIQRVASEQTAESVVSVLHLPGDEMKGRIIGREGRNIRTFESITGVNLIIDDTPEAVLLSCFDPVRREVGRLTLEKLVLDGRIHPHRIEEVHDLARQEVAQLCQRAAEDALVEVGITEIHPELVGLLGRLRYRTSYGQNVLKHLVESAHIAGIMAAELRLDVPTIKRCAFLHDIGKALTHEVEGSHAIVGADVARRYGESEDVVHAIEAHHNEVPPQTVEAVLTQASDACSGGRPGARRESLEAYVRRLERIEEIAGGKLGVERVFAMQAGREVRVMVRPDDVDDLSASMLARDVAKQIEEELTYPGQIRVTVVRESRVTEIAR.

Residues 7-27 (VLLVAVLLLTVVVVGAVLVGV) traverse the membrane as a helical segment. Residues 278 to 359 (VVSVLHLPGD…HRIEEVHDLA (82 aa)) form the KH domain. Residues 404-497 (VLKHLVESAH…TQASDACSGG (94 aa)) form the HD domain.

Belongs to the RNase Y family.

The protein localises to the cell membrane. Endoribonuclease that initiates mRNA decay. The sequence is that of Ribonuclease Y from Salinispora tropica (strain ATCC BAA-916 / DSM 44818 / JCM 13857 / NBRC 105044 / CNB-440).